The sequence spans 479 residues: F-box protein At5g51380 (479 aa).

Residues 1–20 form a disordered region; that stretch reads MTFREKMPTSPKSPLRRRRS. The F-box domain occupies 62-108; sequence DRTLSLSDSLLLKILEKLPESQNEDVSLVCKRWLSVQGRRLRSMKVF.

The sequence is that of F-box protein At5g51380 from Arabidopsis thaliana (Mouse-ear cress).